Consider the following 447-residue polypeptide: Phosphoglucosamine mutase (447 aa).

Residue Ser-100 is the Phosphoserine intermediate of the active site. 4 residues coordinate Mg(2+): Ser-100, Asp-239, Asp-241, and Asp-243. Ser-100 bears the Phosphoserine mark.

Belongs to the phosphohexose mutase family. It depends on Mg(2+) as a cofactor. In terms of processing, activated by phosphorylation.

The enzyme catalyses alpha-D-glucosamine 1-phosphate = D-glucosamine 6-phosphate. In terms of biological role, catalyzes the conversion of glucosamine-6-phosphate to glucosamine-1-phosphate. The sequence is that of Phosphoglucosamine mutase from Halalkalibacterium halodurans (strain ATCC BAA-125 / DSM 18197 / FERM 7344 / JCM 9153 / C-125) (Bacillus halodurans).